Reading from the N-terminus, the 95-residue chain is Large ribosomal subunit protein bL25 (95 aa).

This sequence belongs to the bacterial ribosomal protein bL25 family. As to quaternary structure, part of the 50S ribosomal subunit; part of the 5S rRNA/L5/L18/L25 subcomplex. Contacts the 5S rRNA. Binds to the 5S rRNA independently of L5 and L18.

In terms of biological role, this is one of the proteins that binds to the 5S RNA in the ribosome where it forms part of the central protuberance. The sequence is that of Large ribosomal subunit protein bL25 from Aeromonas salmonicida (strain A449).